The following is a 204-amino-acid chain: Glycerol-3-phosphate acyltransferase (204 aa).

5 helical membrane-spanning segments follow: residues 8-28 (ILIF…CYIF), 53-73 (VPAA…VVIA), 81-101 (FITA…IFFG), 116-136 (FGFS…VAII), and 155-175 (VIFT…IIIL).

The protein belongs to the PlsY family. As to quaternary structure, probably interacts with PlsX.

Its subcellular location is the cell inner membrane. It catalyses the reaction an acyl phosphate + sn-glycerol 3-phosphate = a 1-acyl-sn-glycero-3-phosphate + phosphate. It participates in lipid metabolism; phospholipid metabolism. Functionally, catalyzes the transfer of an acyl group from acyl-phosphate (acyl-PO(4)) to glycerol-3-phosphate (G3P) to form lysophosphatidic acid (LPA). This enzyme utilizes acyl-phosphate as fatty acyl donor, but not acyl-CoA or acyl-ACP. In Francisella tularensis subsp. mediasiatica (strain FSC147), this protein is Glycerol-3-phosphate acyltransferase.